Here is a 143-residue protein sequence, read N- to C-terminus: Putative mediator of RNA polymerase II transcription subunit 11 (143 aa).

Residues 97–143 (ILSHLEDLNNIVENNQEKQEKEKQEKEKLEKEKLEKEKQQSNEMNID) are a coiled coil. Residues 109 to 143 (ENNQEKQEKEKQEKEKLEKEKLEKEKQQSNEMNID) form a disordered region. The span at 111-136 (NQEKQEKEKQEKEKLEKEKLEKEKQQ) shows a compositional bias: basic and acidic residues.

This sequence belongs to the Mediator complex subunit 11 family. In terms of assembly, component of the Mediator complex.

Its subcellular location is the nucleus. Component of the Mediator complex, a coactivator involved in the regulated transcription of nearly all RNA polymerase II-dependent genes. Mediator functions as a bridge to convey information from gene-specific regulatory proteins to the basal RNA polymerase II transcription machinery. Mediator is recruited to promoters by direct interactions with regulatory proteins and serves as a scaffold for the assembly of a functional pre-initiation complex with RNA polymerase II and the general transcription factors. This is Putative mediator of RNA polymerase II transcription subunit 11 (med11) from Dictyostelium discoideum (Social amoeba).